Here is a 1001-residue protein sequence, read N- to C-terminus: Sarcoplasmic/endoplasmic reticulum calcium ATPase 1 (1001 aa).

Over Met1–Ser48 the chain is Cytoplasmic. A helical membrane pass occupies residues Leu49–Ala69. Topologically, residues Cys70 to Val89 are lumenal. Residues Glu90–Arg110 form a helical membrane-spanning segment. The Cytoplasmic portion of the chain corresponds to Asn111–Leu253. A helical transmembrane segment spans residues Asp254–Leu273. Residues Ile274–Tyr295 are Lumenal-facing. Residues Phe296–Ala313 traverse the membrane as a helical segment. 4 residues coordinate Ca(2+): Val304, Ala305, Ile307, and Glu309. Topologically, residues Val314–Met757 are cytoplasmic. The 4-aspartylphosphate intermediate role is filled by Asp351. Asp351 and Thr353 together coordinate Mg(2+). Thr353 serves as a coordination point for ATP. Position 441 is a phosphothreonine (Thr441). Residues Glu442, Arg489, Lys515, and Arg560 each coordinate ATP. Thr569 is subject to Phosphothreonine. Residue Ser581 is modified to Phosphoserine. The ATP site is built by Thr625, Gly626, Asp627, Arg678, and Lys684. Position 703 (Asp703) interacts with Mg(2+). Residue Asn706 participates in ATP binding. Residues Lys758–Leu777 traverse the membrane as a helical segment. Asn768 and Glu771 together coordinate Ca(2+). Residues Thr778–Leu787 are Lumenal-facing. The helical transmembrane segment at Ile788 to Gly808 threads the bilayer. Positions Ile788–Gly808 are interaction with PLN. Residues Asn796, Thr799, and Asp800 each contribute to the Ca(2+) site. The Cytoplasmic segment spans residues Phe809–Leu828. Residues Ile829 to Ala851 form a helical membrane-spanning segment. The Lumenal portion of the chain corresponds to Ala852–Met897. Cys876 and Cys888 are oxidised to a cystine. The chain crosses the membrane as a helical span at residues Thr898–Ser917. Glu908 contributes to the Ca(2+) binding site. Over Glu918–Asn930 the chain is Cytoplasmic. A helical membrane pass occupies residues Ile931–Tyr949. The tract at residues Trp932–Leu943 is interaction with PLN. At Val950–Leu964 the chain is on the lumenal side. Residues Thr965 to Lys985 traverse the membrane as a helical segment. Residues Phe986–Lys1001 are Cytoplasmic-facing.

It belongs to the cation transport ATPase (P-type) (TC 3.A.3) family. Type IIA subfamily. As to quaternary structure, interacts with sarcolipin (SLN). Interacts with phospholamban (PLN). Interacts with myoregulin (MRLN). Interacts with DWORF. Interacts with VMP1. Mg(2+) is required as a cofactor. As to expression, skeletal muscle (at protein level). Skeletal muscle, fast twitch muscle (type II) fibers.

It is found in the endoplasmic reticulum membrane. Its subcellular location is the sarcoplasmic reticulum membrane. It carries out the reaction Ca(2+)(in) + ATP + H2O = Ca(2+)(out) + ADP + phosphate + H(+). Its activity is regulated as follows. Inhibited by sarcolipin (SLN) and myoregulin (MRLN). Has also been shown to be reversibly inhibited by phospholamban (PLN) at low calcium concentrations in vitro. Dephosphorylated PLN decreases the apparent affinity of the ATPase for calcium and this inhibition is regulated by the phosphorylation of PLN in vitro. Enhanced by DWORF; DWORF increases activity by displacing sarcolipin (SLN), phospholamban (PLN) and myoregulin (MRLN). In terms of biological role, key regulator of striated muscle performance by acting as the major Ca(2+) ATPase responsible for the reuptake of cytosolic Ca(2+) into the sarcoplasmic reticulum. Catalyzes the hydrolysis of ATP coupled with the translocation of calcium from the cytosol to the sarcoplasmic reticulum lumen. Contributes to calcium sequestration involved in muscular excitation/contraction. The protein is Sarcoplasmic/endoplasmic reticulum calcium ATPase 1 (ATP2A1) of Oryctolagus cuniculus (Rabbit).